Here is a 249-residue protein sequence, read N- to C-terminus: Uridylate kinase (249 aa).

16-19 serves as a coordination point for ATP; the sequence is KLSG. Gly-57 is a UMP binding site. Gly-58 and Arg-62 together coordinate ATP. UMP is bound by residues Asp-77 and 138–145; that span reads AGMPYFST. The ATP site is built by Asn-166, Tyr-172, and Asp-175.

It belongs to the UMP kinase family. In terms of assembly, homohexamer.

The protein resides in the cytoplasm. It catalyses the reaction UMP + ATP = UDP + ADP. Its pathway is pyrimidine metabolism; CTP biosynthesis via de novo pathway; UDP from UMP (UMPK route): step 1/1. With respect to regulation, inhibited by UTP. Its function is as follows. Catalyzes the reversible phosphorylation of UMP to UDP. This Bifidobacterium adolescentis (strain ATCC 15703 / DSM 20083 / NCTC 11814 / E194a) protein is Uridylate kinase.